The sequence spans 157 residues: 2-C-methyl-D-erythritol 2,4-cyclodiphosphate synthase (157 aa).

Residues Asp-9 and His-11 each coordinate a divalent metal cation. Residues 9–11 and 35–36 contribute to the 4-CDP-2-C-methyl-D-erythritol 2-phosphate site; these read DVH and HS. His-43 is an a divalent metal cation binding site. 4-CDP-2-C-methyl-D-erythritol 2-phosphate is bound by residues 57 to 59, 62 to 66, 101 to 107, 133 to 136, Phe-140, and Arg-143; these read DIG, FPDTD, AEKPKMA, and TTTE.

It belongs to the IspF family. As to quaternary structure, homotrimer. Requires a divalent metal cation as cofactor.

It carries out the reaction 4-CDP-2-C-methyl-D-erythritol 2-phosphate = 2-C-methyl-D-erythritol 2,4-cyclic diphosphate + CMP. Its pathway is isoprenoid biosynthesis; isopentenyl diphosphate biosynthesis via DXP pathway; isopentenyl diphosphate from 1-deoxy-D-xylulose 5-phosphate: step 4/6. Involved in the biosynthesis of isopentenyl diphosphate (IPP) and dimethylallyl diphosphate (DMAPP), two major building blocks of isoprenoid compounds. Catalyzes the conversion of 4-diphosphocytidyl-2-C-methyl-D-erythritol 2-phosphate (CDP-ME2P) to 2-C-methyl-D-erythritol 2,4-cyclodiphosphate (ME-CPP) with a corresponding release of cytidine 5-monophosphate (CMP). The chain is 2-C-methyl-D-erythritol 2,4-cyclodiphosphate synthase from Listeria innocua serovar 6a (strain ATCC BAA-680 / CLIP 11262).